Consider the following 421-residue polypeptide: MSRQMWLDTSALLEAISEYVVRCNGDTFSGLTTGDFNALSNMFTQLSVSSAGYVSDPRVPLQTMSNMFVSFITSTDRCGYMLGKTWFNSDTKPTVSDDFITAYIKPRLQVPMSDTVRQLNNLSLQPSAKPKLYERQNAIMKGLDIPYSEPIEPCKLFRSVAGQTGNIPLMGILLTPPVAQQQPFFVAERRRILFGIRSNAAIPAGAYQFVVPAWASVLSVTGAYVYFTNSFFGTTIAGVTATATAADAATTFTVPTDANNLPVQTDSRLSFSLGGGNINLELGVAKTGFCVAIEGEFTILANRSQAYYTLNSITQTPTSIDDFDVSDFLTTFLSQLRACGQYEIFSDAMDQLTNNLITNYMDPPAIPAGLAFTSPWFRFSERARTILALQNVDLNIRKLMVRHLWVITSLIAVFGRYYRPN.

It belongs to the phytoreovirus outer capsid protein P8 family. In terms of assembly, homotrimer. Homomultimer. Interacts with host peroxisomal glycolate oxidase (GOX). This interaction mediates its relocation to virus factories peripheral to host peroxisomes.

It is found in the virion. The protein localises to the host cytoplasm. In terms of biological role, capsid protein which self-assembles to form the outer icosahedral capsid with a T=13 symmetry, about 70 nm in diameter and consisting of 780 molecules capsid proteins. The polypeptide is Outer capsid protein P8 (Alopecurus aequalis (Barnyard grass)).